The following is a 451-amino-acid chain: UDP-N-acetylmuramoylalanine--D-glutamate ligase (451 aa).

An ATP-binding site is contributed by 118–124; it reads GTKGKST.

This sequence belongs to the MurCDEF family.

The protein localises to the cytoplasm. The enzyme catalyses UDP-N-acetyl-alpha-D-muramoyl-L-alanine + D-glutamate + ATP = UDP-N-acetyl-alpha-D-muramoyl-L-alanyl-D-glutamate + ADP + phosphate + H(+). It functions in the pathway cell wall biogenesis; peptidoglycan biosynthesis. Cell wall formation. Catalyzes the addition of glutamate to the nucleotide precursor UDP-N-acetylmuramoyl-L-alanine (UMA). The polypeptide is UDP-N-acetylmuramoylalanine--D-glutamate ligase (Borreliella burgdorferi (strain ZS7) (Borrelia burgdorferi)).